The chain runs to 336 residues: Glucokinase (336 aa).

12–17 (ADIGGT) is an ATP binding site.

This sequence belongs to the bacterial glucokinase family.

The protein resides in the cytoplasm. It carries out the reaction D-glucose + ATP = D-glucose 6-phosphate + ADP + H(+). This chain is Glucokinase, found in Helicobacter pylori (strain ATCC 700392 / 26695) (Campylobacter pylori).